Here is a 153-residue protein sequence, read N- to C-terminus: Transcriptional repressor NrdR (153 aa).

The segment at 3 to 34 is a zinc-finger region; that stretch reads CPFCGYEDTRVLDSRELSEGRAIRRRRECPQC. Residues 49-139 form the ATP-cone domain; sequence ITVIKKDGRR…VYKDFREIDQ (91 aa).

This sequence belongs to the NrdR family. Zn(2+) serves as cofactor.

Functionally, negatively regulates transcription of bacterial ribonucleotide reductase nrd genes and operons by binding to NrdR-boxes. This chain is Transcriptional repressor NrdR, found in Fervidobacterium nodosum (strain ATCC 35602 / DSM 5306 / Rt17-B1).